The primary structure comprises 327 residues: rRNA 2'-O-methyltransferase fibrillarin (327 aa).

A disordered region spans residues 1–95; that stretch reads MKPGFSPRGG…NQSGKNVMVE (95 aa). Over residues 7 to 80 the composition is skewed to gly residues; the sequence is PRGGGFGGRG…GGNRGRGGGR (74 aa). 6 positions are modified to asymmetric dimethylarginine: arginine 8, arginine 15, arginine 21, arginine 24, arginine 28, and arginine 31. Residues lysine 90, lysine 108, and lysine 115 each participate in a glycyl lysine isopeptide (Lys-Gly) (interchain with G-Cter in SUMO2) cross-link. The residue at position 108 (lysine 108) is an N6-acetyllysine. Position 122 is a phosphoserine (serine 122). At lysine 127 the chain carries N6-acetyllysine. Residues serine 130 and serine 132 each carry the phosphoserine modification. Residues lysine 137, lysine 149, and lysine 164 each participate in a glycyl lysine isopeptide (Lys-Gly) (interchain with G-Cter in SUMO2) cross-link. S-adenosyl-L-methionine contacts are provided by residues 178 to 179 and 197 to 198; these read TT and EF. Residues lysine 211 and lysine 212 each carry the N6-acetyllysine modification. S-adenosyl-L-methionine is bound by residues 222 to 223 and 242 to 245; these read DA and DVAQ.

It belongs to the methyltransferase superfamily. Fibrillarin family. As to quaternary structure, component of box C/D small nucleolar ribonucleoprotein (snoRNP) particles that contain SNU13, FBL, NOP5 and NOP56, plus a guide RNA. It is associated with the U3, U8, U13, X and Y small nuclear RNAs. Component of several ribosomal and nucleolar protein complexes. Part of the small subunit (SSU) processome, composed of more than 70 proteins and the RNA chaperone small nucleolar RNA (snoRNA) U3. Interacts with PRMT5 and UTP20. Interacts with DDX5 and C1QBP. Interacts with NOL11. Interacts with PIH1D1. Interacts with RRP1B. Interacts with NOLC1. Interacts with SDE2. Interacts with NOP2 and NOP56. By homology to other fibrillarins, some or all of the N-terminal domain arginines are modified to asymmetric dimethylarginine (DMA). In terms of processing, ubiquitinated. Ubiquitination leads to proteasomal degradation. Deubiquitinated by USP36. Post-translationally, acetylated by CREBBP/CBP, preventing methylation of 'Gln-105' of histone H2A (H2AQ104me), without affecting rRNA methylation. Deacetylation by SIRT7 restores methylation of 'Gln-105' of histone H2A (H2AQ104me).

The protein resides in the nucleus. Its subcellular location is the nucleolus. The protein localises to the nucleoplasm. The catalysed reaction is L-glutaminyl-[histone H2A] + S-adenosyl-L-methionine = N(5)-methyl-L-glutaminyl-[histone H2A] + S-adenosyl-L-homocysteine + H(+). It catalyses the reaction a ribonucleotide in rRNA + S-adenosyl-L-methionine = a 2'-O-methylribonucleotide in rRNA + S-adenosyl-L-homocysteine + H(+). It carries out the reaction a ribonucleotide in U6 snRNA + S-adenosyl-L-methionine = a 2'-O-methylribonucleotide in U6 snRNA + S-adenosyl-L-homocysteine + H(+). Its function is as follows. S-adenosyl-L-methionine-dependent methyltransferase that has the ability to methylate both RNAs and proteins. Involved in pre-rRNA processing by catalyzing the site-specific 2'-hydroxyl methylation of ribose moieties in pre-ribosomal RNA. Site specificity is provided by a guide RNA that base pairs with the substrate. Methylation occurs at a characteristic distance from the sequence involved in base pairing with the guide RNA. Probably catalyzes 2'-O-methylation of U6 snRNAs in box C/D RNP complexes. U6 snRNA 2'-O-methylation is required for mRNA splicing fidelity. Also acts as a protein methyltransferase by mediating methylation of 'Gln-105' of histone H2A (H2AQ104me), a modification that impairs binding of the FACT complex and is specifically present at 35S ribosomal DNA locus. Part of the small subunit (SSU) processome, first precursor of the small eukaryotic ribosomal subunit. During the assembly of the SSU processome in the nucleolus, many ribosome biogenesis factors, an RNA chaperone and ribosomal proteins associate with the nascent pre-rRNA and work in concert to generate RNA folding, modifications, rearrangements and cleavage as well as targeted degradation of pre-ribosomal RNA by the RNA exosome. This chain is rRNA 2'-O-methyltransferase fibrillarin, found in Mus musculus (Mouse).